Reading from the N-terminus, the 126-residue chain is Fluoride-specific ion channel FluC (126 aa).

A run of 4 helical transmembrane segments spans residues 4–24 (PLLS…FLGL), 33–53 (IPLG…FAMA), 67–87 (FVIT…IEIV), and 97–117 (MAML…CLGL). Residues Gly74 and Thr77 each contribute to the Na(+) site.

The protein belongs to the fluoride channel Fluc/FEX (TC 1.A.43) family.

It localises to the cell inner membrane. The catalysed reaction is fluoride(in) = fluoride(out). Its activity is regulated as follows. Na(+) is not transported, but it plays an essential structural role and its presence is essential for fluoride channel function. Functionally, fluoride-specific ion channel. Important for reducing fluoride concentration in the cell, thus reducing its toxicity. In Acinetobacter baumannii (strain AB307-0294), this protein is Fluoride-specific ion channel FluC.